Reading from the N-terminus, the 452-residue chain is Phosphoglucosamine mutase (452 aa).

S103 (phosphoserine intermediate) is an active-site residue. Mg(2+) is bound by residues S103, D243, D245, and D247. A Phosphoserine modification is found at S103.

The protein belongs to the phosphohexose mutase family. It depends on Mg(2+) as a cofactor. In terms of processing, activated by phosphorylation.

It carries out the reaction alpha-D-glucosamine 1-phosphate = D-glucosamine 6-phosphate. Functionally, catalyzes the conversion of glucosamine-6-phosphate to glucosamine-1-phosphate. The chain is Phosphoglucosamine mutase from Exiguobacterium sp. (strain ATCC BAA-1283 / AT1b).